The sequence spans 189 residues: Peptidyl-tRNA hydrolase (189 aa).

Residue Y14 participates in tRNA binding. H19 serves as the catalytic Proton acceptor. 3 residues coordinate tRNA: Y64, N66, and N112.

This sequence belongs to the PTH family. Monomer.

It localises to the cytoplasm. The catalysed reaction is an N-acyl-L-alpha-aminoacyl-tRNA + H2O = an N-acyl-L-amino acid + a tRNA + H(+). Its function is as follows. Hydrolyzes ribosome-free peptidyl-tRNAs (with 1 or more amino acids incorporated), which drop off the ribosome during protein synthesis, or as a result of ribosome stalling. Catalyzes the release of premature peptidyl moieties from peptidyl-tRNA molecules trapped in stalled 50S ribosomal subunits, and thus maintains levels of free tRNAs and 50S ribosomes. In Dehalococcoides mccartyi (strain ATCC BAA-2266 / KCTC 15142 / 195) (Dehalococcoides ethenogenes (strain 195)), this protein is Peptidyl-tRNA hydrolase.